We begin with the raw amino-acid sequence, 402 residues long: Digeranylgeranylglycerophospholipid reductase (402 aa).

FAD-binding residues include G15, E34, C45, A46, G48, R99, A123, D280, G292, and I293.

This sequence belongs to the geranylgeranyl reductase family. DGGGPL reductase subfamily. FAD serves as cofactor.

It catalyses the reaction a 2,3-bis-O-phytanyl-sn-glycerol 1-phospholipid + 8 oxidized 2[4Fe-4S]-[ferredoxin] = a 2,3-bis-O-(geranylgeranyl)-sn-glycerol 1-phospholipid + 8 reduced 2[4Fe-4S]-[ferredoxin] + 16 H(+). The enzyme catalyses 2,3-bis-O-(phytanyl)-sn-glycerol 1-phosphate + 8 oxidized 2[4Fe-4S]-[ferredoxin] = 2,3-bis-O-(geranylgeranyl)-sn-glycerol 1-phosphate + 8 reduced 2[4Fe-4S]-[ferredoxin] + 16 H(+). The catalysed reaction is a 2,3-bis-O-phytanyl-sn-glycerol 1-phospholipid + 8 A = a 2,3-bis-O-(geranylgeranyl)-sn-glycerol 1-phospholipid + 8 AH2. It carries out the reaction CDP-2,3-bis-O-(geranylgeranyl)-sn-glycerol + 8 AH2 = CDP-2,3-bis-O-(phytanyl)-sn-glycerol + 8 A. It catalyses the reaction archaetidylserine + 8 AH2 = 2,3-bis-O-phytanyl-sn-glycero-3-phospho-L-serine + 8 A. It participates in membrane lipid metabolism; glycerophospholipid metabolism. Functionally, is involved in the reduction of 2,3-digeranylgeranylglycerophospholipids (unsaturated archaeols) into 2,3-diphytanylglycerophospholipids (saturated archaeols) in the biosynthesis of archaeal membrane lipids. Catalyzes the formation of archaetidic acid (2,3-di-O-phytanyl-sn-glyceryl phosphate) from 2,3-di-O-geranylgeranylglyceryl phosphate (DGGGP) via the hydrogenation of each double bond of the isoprenoid chains. Is also probably able to reduce double bonds of geranyl groups in CDP-2,3-bis-O-(geranylgeranyl)-sn-glycerol and archaetidylserine, thus acting at various stages in the biosynthesis of archaeal membrane lipids. In Methanospirillum hungatei JF-1 (strain ATCC 27890 / DSM 864 / NBRC 100397 / JF-1), this protein is Digeranylgeranylglycerophospholipid reductase.